The primary structure comprises 568 residues: Protein yellow (568 aa).

An N-terminal signal peptide occupies residues 1-28 (MHAQDKGGVLPGLSLLLIAVAMVCPSQA). N-linked (GlcNAc...) asparagine glycosylation is found at asparagine 151 and asparagine 222.

This sequence belongs to the major royal jelly protein family.

The protein resides in the secreted. Controls the pigmentation pattern of the adult cuticle and larval mouth parts. The polypeptide is Protein yellow (y) (Drosophila guanche (Fruit fly)).